The chain runs to 1117 residues: DNA polymerase II large subunit (1117 aa).

Positions serine 279–lysine 294 are enriched in basic and acidic residues. Residues serine 279–alanine 299 form a disordered region.

It belongs to the archaeal DNA polymerase II family. In terms of assembly, heterodimer of a large subunit and a small subunit.

It carries out the reaction DNA(n) + a 2'-deoxyribonucleoside 5'-triphosphate = DNA(n+1) + diphosphate. The enzyme catalyses Exonucleolytic cleavage in the 3'- to 5'-direction to yield nucleoside 5'-phosphates.. Its function is as follows. Possesses two activities: a DNA synthesis (polymerase) and an exonucleolytic activity that degrades single-stranded DNA in the 3'- to 5'-direction. Has a template-primer preference which is characteristic of a replicative DNA polymerase. The polypeptide is DNA polymerase II large subunit (Methanosphaera stadtmanae (strain ATCC 43021 / DSM 3091 / JCM 11832 / MCB-3)).